The chain runs to 316 residues: Pantothenate kinase (316 aa).

Residue 95-102 participates in ATP binding; that stretch reads GSVAVGKS.

It belongs to the prokaryotic pantothenate kinase family.

It localises to the cytoplasm. It carries out the reaction (R)-pantothenate + ATP = (R)-4'-phosphopantothenate + ADP + H(+). Its pathway is cofactor biosynthesis; coenzyme A biosynthesis; CoA from (R)-pantothenate: step 1/5. This chain is Pantothenate kinase, found in Pectobacterium carotovorum subsp. carotovorum (strain PC1).